We begin with the raw amino-acid sequence, 440 residues long: Protein scalloped (440 aa).

Residues 32–65 (TEQQAVGPGTIPSPWTPVNAGPPGALGSADTNGS) are disordered. The TEA DNA-binding region spans 86–162 (SADAEGVWSP…QVLARRKLRE (77 aa)).

In terms of assembly, the C-terminus of sd interacts with the C-terminal serine-rich protein domain of vg, to form a complex which acts as a selector for wing development. Interacts (via C-terminus) with yki (via N-terminus) and this interaction enhances its transcriptional activity. As to expression, subset of neuroblasts in the central nervous system and in the peripheral sense organs of the embryo. Expressed in the developing wing primordia initially along the D/V wing boundary, and by the late third larval instar, maximal expression is seen in cells at the D/V wing disk boundary. Less expression in cells located farther from this boundary. Also expressed in wing progenitor cells.

Its subcellular location is the nucleus. Functionally, transcription factor which plays a key role in the Hippo/SWH (Sav/Wts/Hpo) signaling pathway, a signaling pathway that plays a pivotal role in organ size control and tumor suppression by restricting proliferation and promoting apoptosis. The core of this pathway is composed of a kinase cascade wherein Hippo (Hpo), in complex with its regulatory protein Salvador (Sav), phosphorylates and activates Warts (Wts) in complex with its regulatory protein Mats, which in turn phosphorylates and inactivates the Yorkie (Yki) oncoprotein. The Hippo/SWH signaling pathway inhibits the activity of the transcriptional complex formed by Scalloped (sd) and Yki and the target genes of this pathway include cyclin-E (cycE), diap1 and bantam. Sd promotes nuclear localization of Yki. Involved in the regulation of cell-specific gene expression during development, particularly in the differentiation of the nervous system. When in combination with vestigial (vg) it acts as a transcriptional activation complex that regulates gene expression in the wing. Binding to vg switches the DNA target selectivity of sd. Required autonomously for cell proliferation and viability within the wing blade. Required for proper sensory organ precursor (SOP) differentiation at the wing margin; required for correct expression of sens. The polypeptide is Protein scalloped (sd) (Drosophila melanogaster (Fruit fly)).